Consider the following 472-residue polypeptide: Pyruvate kinase (472 aa).

Arginine 33 lines the substrate pocket. 3 residues coordinate K(+): asparagine 35, serine 37, and aspartate 67. An ATP-binding site is contributed by 35–38 (NFSH). 2 residues coordinate ATP: arginine 74 and lysine 155. Glutamate 220 serves as a coordination point for Mg(2+). Residues glycine 243, aspartate 244, and threonine 276 each contribute to the substrate site. Residue aspartate 244 coordinates Mg(2+).

The protein belongs to the pyruvate kinase family. In terms of assembly, homotetramer. Mg(2+) is required as a cofactor. It depends on K(+) as a cofactor.

The enzyme catalyses pyruvate + ATP = phosphoenolpyruvate + ADP + H(+). It participates in carbohydrate degradation; glycolysis; pyruvate from D-glyceraldehyde 3-phosphate: step 5/5. This chain is Pyruvate kinase (pyk), found in Mycobacterium intracellulare.